The primary structure comprises 486 residues: uncharacterized protein (486 aa).

The protein belongs to the UbiD family.

This is an uncharacterized protein from Aquifex aeolicus (strain VF5).